Here is an 89-residue protein sequence, read N- to C-terminus: Small ribosomal subunit protein uS15 (89 aa).

This sequence belongs to the universal ribosomal protein uS15 family. In terms of assembly, part of the 30S ribosomal subunit. Forms a bridge to the 50S subunit in the 70S ribosome, contacting the 23S rRNA.

Functionally, one of the primary rRNA binding proteins, it binds directly to 16S rRNA where it helps nucleate assembly of the platform of the 30S subunit by binding and bridging several RNA helices of the 16S rRNA. In terms of biological role, forms an intersubunit bridge (bridge B4) with the 23S rRNA of the 50S subunit in the ribosome. The sequence is that of Small ribosomal subunit protein uS15 from Hyphomonas neptunium (strain ATCC 15444).